A 315-amino-acid polypeptide reads, in one-letter code: Glutathione synthetase (315 aa).

One can recognise an ATP-grasp domain in the interval 125–310 (KLYTAWFADL…ITGMLMDAIE (186 aa)). An ATP-binding site is contributed by 151–207 (WEKHGDIIMKPLDGMGGASIFRVKEGDPNIGVIAETLTELGNRYCMAQNYLPAIKDG). 2 residues coordinate Mg(2+): Glu-281 and Asn-283.

Belongs to the prokaryotic GSH synthase family. It depends on Mg(2+) as a cofactor. Requires Mn(2+) as cofactor.

It catalyses the reaction gamma-L-glutamyl-L-cysteine + glycine + ATP = glutathione + ADP + phosphate + H(+). Its pathway is sulfur metabolism; glutathione biosynthesis; glutathione from L-cysteine and L-glutamate: step 2/2. In Salmonella typhimurium (strain LT2 / SGSC1412 / ATCC 700720), this protein is Glutathione synthetase.